A 380-amino-acid chain; its full sequence is Glycogenin-2 (380 aa).

Positions 10, 16, and 95 each coordinate UDP. The UDP-alpha-D-glucose site is built by Leu-10, Tyr-16, Arg-95, Lys-104, Asp-120, Ala-121, Asp-122, Asn-158, Thr-159, Asp-185, Asp-188, and Gln-189. 3 residues coordinate UDP: Asp-120, Ala-121, and Asp-122. Mn(2+) is bound at residue Asp-120. Asp-122 is a Mn(2+) binding site. O-linked (Glc...) tyrosine glycans are attached at residues Tyr-230 and Tyr-232. Residues His-249, Gly-252, and Lys-255 each coordinate UDP. Residue His-249 participates in Mn(2+) binding. UDP-alpha-D-glucose-binding residues include Gly-252 and Lys-255. The segment at 331–357 (SVDRNASQKSTAEKHDIEKPTSKPQSA) is disordered. Basic and acidic residues predominate over residues 341–351 (TAEKHDIEKPT). O-linked (Glc...) tyrosine glycosylation occurs at Tyr-367.

It belongs to the glycosyltransferase 8 family. Glycogenin subfamily. As to quaternary structure, interacts with glycogen synthase GSY2. The cofactor is Mn(2+).

The protein localises to the cytoplasm. The protein resides in the vacuole. It carries out the reaction L-tyrosyl-[glycogenin] + UDP-alpha-D-glucose = alpha-D-glucosyl-L-tyrosyl-[glycogenin] + UDP + H(+). The catalysed reaction is [1,4-alpha-D-glucosyl](n)-L-tyrosyl-[glycogenin] + UDP-alpha-D-glucose = [1,4-alpha-D-glucosyl](n+1)-L-tyrosyl-[glycogenin] + UDP + H(+). Functionally, self-glucosylating initiator of glycogen synthesis. It catalyzes the formation of a short alpha (1,4)-glucosyl chain covalently attached via a glucose 1-O-tyrosyl linkage to internal tyrosine residues and these chains act as primers for the elongation reaction catalyzed by glycogen synthase. Capable of transferring glucosyl residues to unbound acceptors such as free oligoglucans or oligoglucan derivatives. This is Glycogenin-2 (GLG2) from Saccharomyces cerevisiae (strain YJM789) (Baker's yeast).